A 250-amino-acid chain; its full sequence is tRNA (guanine-N(1)-)-methyltransferase (250 aa).

S-adenosyl-L-methionine contacts are provided by residues glycine 108 and 127–132 (LGDFVL).

It belongs to the RNA methyltransferase TrmD family. Homodimer.

It localises to the cytoplasm. The catalysed reaction is guanosine(37) in tRNA + S-adenosyl-L-methionine = N(1)-methylguanosine(37) in tRNA + S-adenosyl-L-homocysteine + H(+). Functionally, specifically methylates guanosine-37 in various tRNAs. The chain is tRNA (guanine-N(1)-)-methyltransferase from Streptococcus agalactiae serotype Ia (strain ATCC 27591 / A909 / CDC SS700).